The sequence spans 174 residues: Protein GrpE (174 aa).

Residues 1 to 35 form a disordered region; it reads MAQDIKNEEVEEVQEEEVVETAEETTPEKSELDLA. Positions 9–25 are enriched in acidic residues; sequence EVEEVQEEEVVETAEET. A compositionally biased stretch (basic and acidic residues) spans 26–35; that stretch reads TPEKSELDLA.

It belongs to the GrpE family. In terms of assembly, homodimer.

The protein resides in the cytoplasm. Participates actively in the response to hyperosmotic and heat shock by preventing the aggregation of stress-denatured proteins, in association with DnaK and GrpE. It is the nucleotide exchange factor for DnaK and may function as a thermosensor. Unfolded proteins bind initially to DnaJ; upon interaction with the DnaJ-bound protein, DnaK hydrolyzes its bound ATP, resulting in the formation of a stable complex. GrpE releases ADP from DnaK; ATP binding to DnaK triggers the release of the substrate protein, thus completing the reaction cycle. Several rounds of ATP-dependent interactions between DnaJ, DnaK and GrpE are required for fully efficient folding. This is Protein GrpE from Streptococcus pneumoniae (strain ATCC 700669 / Spain 23F-1).